Reading from the N-terminus, the 58-residue chain is MLAIFNIYLDNAFHLNGIILAKLPEAYAIFDPIVDVMPIIPVFFFLLAFVWQASVSFR.

Positions 1 to 21 (MLAIFNIYLDNAFHLNGIILA) are excised as a propeptide. A helical membrane pass occupies residues 29-49 (IFDPIVDVMPIIPVFFFLLAF).

This sequence belongs to the PsbK family. PSII is composed of 1 copy each of membrane proteins PsbA, PsbB, PsbC, PsbD, PsbE, PsbF, PsbH, PsbI, PsbJ, PsbK, PsbL, PsbM, PsbT, PsbX, PsbY, PsbZ, Psb30/Ycf12, at least 3 peripheral proteins of the oxygen-evolving complex and a large number of cofactors. It forms dimeric complexes.

It localises to the plastid. It is found in the chloroplast thylakoid membrane. In terms of biological role, one of the components of the core complex of photosystem II (PSII). PSII is a light-driven water:plastoquinone oxidoreductase that uses light energy to abstract electrons from H(2)O, generating O(2) and a proton gradient subsequently used for ATP formation. It consists of a core antenna complex that captures photons, and an electron transfer chain that converts photonic excitation into a charge separation. The sequence is that of Photosystem II reaction center protein K from Physcomitrium patens (Spreading-leaved earth moss).